The primary structure comprises 229 residues: Interleukin-27 subunit beta (229 aa).

Residues 1-20 (MTPQLLLALVLWASCPPCSG) form the signal peptide. Fibronectin type-III domains follow at residues 24–130 (PPAA…IKPD) and 131–227 (PPEG…TMSL). Asparagine 55 and asparagine 105 each carry an N-linked (GlcNAc...) asparagine glycan.

This sequence belongs to the type I cytokine receptor family. Type 3 subfamily. Heterodimer with IL27/IL27A; not disulfide-linked. This heterodimer is known as interleukin IL-27. Heterodimer with IL12A; not disulfide-linked. This heterodimer is known as interleukin IL-35. Interacts with SQSTM1.

It localises to the secreted. Functionally, associates with IL27 to form the IL-27 interleukin, a heterodimeric cytokine which functions in innate immunity. IL-27 has pro- and anti-inflammatory properties, that can regulate T-helper cell development, suppress T-cell proliferation, stimulate cytotoxic T-cell activity, induce isotype switching in B-cells, and that has diverse effects on innate immune cells. Among its target cells are CD4 T-helper cells which can differentiate in type 1 effector cells (TH1), type 2 effector cells (TH2) and IL17 producing helper T-cells (TH17). It drives rapid clonal expansion of naive but not memory CD4 T-cells. It also strongly synergizes with IL-12 to trigger interferon-gamma/IFN-gamma production of naive CD4 T-cells, binds to the cytokine receptor WSX-1/TCCR. Another important role of IL-27 is its antitumor activity as well as its antiangiogenic activity with activation of production of antiangiogenic chemokines. This is Interleukin-27 subunit beta (EBI3) from Homo sapiens (Human).